The sequence spans 450 residues: Bifunctional protein GlmU (450 aa).

A pyrophosphorylase region spans residues 1 to 229; sequence MRRHAIILAA…VEEIMGVNDR (229 aa). UDP-N-acetyl-alpha-D-glucosamine is bound by residues 8 to 11, Lys-22, Gln-72, and 77 to 78; these read LAAG and GT. Asp-102 serves as a coordination point for Mg(2+). 3 residues coordinate UDP-N-acetyl-alpha-D-glucosamine: Gly-139, Glu-154, and Asn-227. Asn-227 lines the Mg(2+) pocket. Positions 230 to 250 are linker; sequence VMLSQAEKAMQRRTNHYHMLN. An N-acetyltransferase region spans residues 251–450; sequence GVTIIDPDST…RQTTKEGYRK (200 aa). Positions 332 and 350 each coordinate UDP-N-acetyl-alpha-D-glucosamine. His-362 (proton acceptor) is an active-site residue. Positions 365 and 376 each coordinate UDP-N-acetyl-alpha-D-glucosamine. Acetyl-CoA-binding positions include 385-386, Ala-422, and Arg-439; that span reads NY.

In the N-terminal section; belongs to the N-acetylglucosamine-1-phosphate uridyltransferase family. It in the C-terminal section; belongs to the transferase hexapeptide repeat family. As to quaternary structure, homotrimer. The cofactor is Mg(2+).

It is found in the cytoplasm. The enzyme catalyses alpha-D-glucosamine 1-phosphate + acetyl-CoA = N-acetyl-alpha-D-glucosamine 1-phosphate + CoA + H(+). The catalysed reaction is N-acetyl-alpha-D-glucosamine 1-phosphate + UTP + H(+) = UDP-N-acetyl-alpha-D-glucosamine + diphosphate. The protein operates within nucleotide-sugar biosynthesis; UDP-N-acetyl-alpha-D-glucosamine biosynthesis; N-acetyl-alpha-D-glucosamine 1-phosphate from alpha-D-glucosamine 6-phosphate (route II): step 2/2. It participates in nucleotide-sugar biosynthesis; UDP-N-acetyl-alpha-D-glucosamine biosynthesis; UDP-N-acetyl-alpha-D-glucosamine from N-acetyl-alpha-D-glucosamine 1-phosphate: step 1/1. Its pathway is bacterial outer membrane biogenesis; LPS lipid A biosynthesis. In terms of biological role, catalyzes the last two sequential reactions in the de novo biosynthetic pathway for UDP-N-acetylglucosamine (UDP-GlcNAc). The C-terminal domain catalyzes the transfer of acetyl group from acetyl coenzyme A to glucosamine-1-phosphate (GlcN-1-P) to produce N-acetylglucosamine-1-phosphate (GlcNAc-1-P), which is converted into UDP-GlcNAc by the transfer of uridine 5-monophosphate (from uridine 5-triphosphate), a reaction catalyzed by the N-terminal domain. This is Bifunctional protein GlmU from Staphylococcus aureus (strain USA300).